An 876-amino-acid polypeptide reads, in one-letter code: Leucine--tRNA ligase (876 aa).

The short motif at 42-52 (PYPSGKLHMGH) is the 'HIGH' region element. Positions 634 to 638 (KMGKS) match the 'KMSKS' region motif. Residue Lys637 participates in ATP binding.

Belongs to the class-I aminoacyl-tRNA synthetase family.

The protein localises to the cytoplasm. The catalysed reaction is tRNA(Leu) + L-leucine + ATP = L-leucyl-tRNA(Leu) + AMP + diphosphate. In Variovorax paradoxus (strain S110), this protein is Leucine--tRNA ligase.